Reading from the N-terminus, the 138-residue chain is MPTINQLIRKGRVSKVENSKSPALNKGYNSFKKEHTNVSSPQKRGVCTRVGTMTPKKPNSALRKYARVRLTNGIEVTAYIPGIGHNLQEHSVVLIRGGRVKDLPGVRYHIVRGALDTAGVENRAQGRSKYGTKRPKAK.

Residues 33-55 (KEHTNVSSPQKRGVCTRVGTMTP) are disordered. Position 102 is a 3-methylthioaspartic acid (D102).

Belongs to the universal ribosomal protein uS12 family. Part of the 30S ribosomal subunit. Contacts proteins S8 and S17. May interact with IF1 in the 30S initiation complex.

Functionally, with S4 and S5 plays an important role in translational accuracy. Interacts with and stabilizes bases of the 16S rRNA that are involved in tRNA selection in the A site and with the mRNA backbone. Located at the interface of the 30S and 50S subunits, it traverses the body of the 30S subunit contacting proteins on the other side and probably holding the rRNA structure together. The combined cluster of proteins S8, S12 and S17 appears to hold together the shoulder and platform of the 30S subunit. This chain is Small ribosomal subunit protein uS12, found in Bacillus velezensis (strain DSM 23117 / BGSC 10A6 / LMG 26770 / FZB42) (Bacillus amyloliquefaciens subsp. plantarum).